The sequence spans 258 residues: Phosphoribosylformylglycinamidine synthase subunit PurQ (258 aa).

Positions 7–238 (IGILLMEGTN…QAMYLETEKD (232 aa)) constitute a Glutamine amidotransferase type-1 domain. Catalysis depends on C97, which acts as the Nucleophile. Active-site residues include H220 and E222.

In terms of assembly, part of the FGAM synthase complex composed of 1 PurL, 1 PurQ and 2 PurS subunits.

The protein localises to the cytoplasm. It carries out the reaction N(2)-formyl-N(1)-(5-phospho-beta-D-ribosyl)glycinamide + L-glutamine + ATP + H2O = 2-formamido-N(1)-(5-O-phospho-beta-D-ribosyl)acetamidine + L-glutamate + ADP + phosphate + H(+). The catalysed reaction is L-glutamine + H2O = L-glutamate + NH4(+). The protein operates within purine metabolism; IMP biosynthesis via de novo pathway; 5-amino-1-(5-phospho-D-ribosyl)imidazole from N(2)-formyl-N(1)-(5-phospho-D-ribosyl)glycinamide: step 1/2. Functionally, part of the phosphoribosylformylglycinamidine synthase complex involved in the purines biosynthetic pathway. Catalyzes the ATP-dependent conversion of formylglycinamide ribonucleotide (FGAR) and glutamine to yield formylglycinamidine ribonucleotide (FGAM) and glutamate. The FGAM synthase complex is composed of three subunits. PurQ produces an ammonia molecule by converting glutamine to glutamate. PurL transfers the ammonia molecule to FGAR to form FGAM in an ATP-dependent manner. PurS interacts with PurQ and PurL and is thought to assist in the transfer of the ammonia molecule from PurQ to PurL. The polypeptide is Phosphoribosylformylglycinamidine synthase subunit PurQ (Thermoplasma volcanium (strain ATCC 51530 / DSM 4299 / JCM 9571 / NBRC 15438 / GSS1)).